The chain runs to 1905 residues: Transport and Golgi organization protein 1 homolog (1905 aa).

The first 22 residues, 1–22 (MAAAQGLLFWLLLLGPPCRVPG), serve as a signal peptide directing secretion. The Lumenal portion of the chain corresponds to 23–1141 (QPEQDPGRRF…EPASVTPLEN (1119 aa)). The SH3 domain occupies 45–107 (MLMYRGEALE…PKDLIQVVHE (63 aa)). Residues 154 to 167 (SEKVKEKTAQRVEE) are compositionally biased toward basic and acidic residues. 2 disordered regions span residues 154–259 (SEKV…HEQE) and 313–621 (TVGK…IKDR). A glycan (N-linked (GlcNAc...) asparagine) is linked at N173. Over residues 173–190 (NESDAEPEPGEPNSEESE) the composition is skewed to acidic residues. Positions 198–208 (AELRERSEAQK) are enriched in basic and acidic residues. Polar residues predominate over residues 209–220 (SHPQVNSQTGHA). Residues S226 and S229 each carry the phosphoserine modification. Residues 234-245 (LQDKLKVPDSEN) show a composition bias toward basic and acidic residues. N246 carries an N-linked (GlcNAc...) asparagine glycan. Over residues 246 to 255 (NKTSNSSQVS) the composition is skewed to polar residues. Over residues 317–327 (EEEENKEDFDE) the composition is skewed to acidic residues. 2 stretches are compositionally biased toward basic and acidic residues: residues 337–366 (EDTK…KVEE) and 373–386 (KKGD…REDT). The segment covering 392–414 (MEGEENTDTDLESSDSKEEDDPL) has biased composition (acidic residues). Composition is skewed to basic and acidic residues over residues 419–436 (RLGK…KAAD) and 459–480 (HMKD…HEVG). Residues 467 to 527 (VEEPRRDWVQ…ANQENDLKGA (61 aa)) are a coiled coil. A compositionally biased stretch (polar residues) spans 488-500 (DQAVQGSSQSGHL). A compositionally biased stretch (basic and acidic residues) spans 531–542 (ISKEMLHEEKPS). Residue N627 is glycosylated (N-linked (GlcNAc...) asparagine). Disordered stretches follow at residues 657–908 (QQGG…PHAP), 1036–1059 (APPA…QPPL), and 1085–1118 (PVTR…TPVD). Basic and acidic residues predominate over residues 669 to 714 (VSEKRELPEEEVTRVTKDASDEGQEVRKTGQTDSIEGRGFRPKEPN). Over residues 715-730 (PEDEDYSPEELLEDEN) the composition is skewed to acidic residues. Basic and acidic residues-rich tracts occupy residues 736–751 (QSKE…RLDV), 766–789 (TDPE…KNET), 842–859 (SQKK…EGHP), and 868–884 (PGVE…EKFV). S873 is modified (phosphoserine). The stretch at 1142–1162 (AIAFIYSLVFHLTKTLLATLP) is an intramembrane region. At 1163–1173 (DDVQPGPDFYG) the chain is on the lumenal side. The chain crosses the membrane as a helical span at residues 1174–1194 (LPWKPVLITASLGIVSFAVFF). The Cytoplasmic portion of the chain corresponds to 1195-1905 (WRTVLAVKSR…DCSPALKQSP (711 aa)). The interval 1208-1647 (VTEQQISEKL…VIVKPMPGRP (440 aa)) is mediates interaction with MIA2. Residues 1211–1393 (QQISEKLKNI…SQKDLEVALT (183 aa)) are a coiled coil. Residues 1416–1443 (SESEDQNKGGSESDELANGEVGGDRSEK) are disordered. At S1428 the chain carries Phosphoserine. Residues 1484 to 1636 (NLEDQIKKLE…TQKMAMMQEE (153 aa)) adopt a coiled-coil conformation. The segment at 1639–1905 (IVKPMPGRPN…DCSPALKQSP (267 aa)) is disordered. Residues 1647–1664 (PNTQNPPRRGPLSQNGSF) are compositionally biased toward polar residues. Residues S1663, S1675, S1703, S1724, S1738, and S1742 each carry the phosphoserine modification. The interval 1748–1905 (DEGKVSMAAK…DCSPALKQSP (158 aa)) is proline-rich domain (PRD); mediates interaction with the COPII coat subunits SEC23A and SEC23B. Residues 1776–1806 (LLPPIRYGPPPQLCGPFGPRPLPPPFGPGMR) show a composition bias toward pro residues. Residue R1781 is modified to Asymmetric dimethylarginine. The interval 1785–1845 (PPQLCGPFGP…GHAPFRPLGS (61 aa)) is SEC16A-interacting region (SIR); required for its localization to endoplasmic reticulum exit sites and for its interaction with SEC16A. A compositionally biased stretch (basic and acidic residues) spans 1821–1831 (GKRDLPLDPRE). Residues S1890 and S1904 each carry the phosphoserine modification. Residues 1891-1905 (QGASQDCSPALKQSP) show a composition bias toward polar residues.

This sequence belongs to the MIA/OTOR family. Tango1 subfamily. Interacts with MIA2. Interacts (via SH3 domain) with COL7A1. Interacts with the COPII coat subunits SEC23A, SEC23B and maybe SEC24C. May interact with APOB and MIA2. Interacts with SEC16A.

It localises to the endoplasmic reticulum membrane. In terms of biological role, plays a role in the transport of cargos that are too large to fit into COPII-coated vesicles and require specific mechanisms to be incorporated into membrane-bound carriers and exported from the endoplasmic reticulum. This protein is required for collagen VII (COL7A1) secretion by loading COL7A1 into transport carriers. It may participate in cargo loading of COL7A1 at endoplasmic reticulum exit sites by binding to COPII coat subunits Sec23/24 and guiding SH3-bound COL7A1 into a growing carrier. Does not play a role in global protein secretion and is apparently specific to COL7A1 cargo loading. However, it may participate in secretion of other proteins in cells that do not secrete COL7A1. It is also specifically required for the secretion of lipoproteins by participating in their export from the endoplasmic reticulum. Required for correct assembly of COPII coat components at endoplasmic reticulum exit sites (ERES) and for the localization of SEC16A and membrane-bound ER-resident complexes consisting of MIA2 and PREB/SEC12 to ERES. The polypeptide is Transport and Golgi organization protein 1 homolog (Bos taurus (Bovine)).